Reading from the N-terminus, the 106-residue chain is ATP-dependent Clp protease adapter protein ClpS (106 aa).

Residues 1 to 10 (MSQKTVHDQD) are compositionally biased toward basic and acidic residues. The segment at 1–23 (MSQKTVHDQDNALLLETGNTKVA) is disordered.

It belongs to the ClpS family. As to quaternary structure, binds to the N-terminal domain of the chaperone ClpA.

In terms of biological role, involved in the modulation of the specificity of the ClpAP-mediated ATP-dependent protein degradation. The chain is ATP-dependent Clp protease adapter protein ClpS from Xylella fastidiosa (strain M23).